A 165-amino-acid polypeptide reads, in one-letter code: NAD(P)H-quinone oxidoreductase subunit I, chloroplastic (165 aa).

4Fe-4S ferredoxin-type domains follow at residues 55–84 and 95–124; these read GRIHFEFDKCIACEVCVRVCPINLPVVDWE and KSYSIDFGVCIFCGNCVEYCPTNCLSMTEE. Cys64, Cys67, Cys70, Cys74, Cys104, Cys107, Cys110, and Cys114 together coordinate [4Fe-4S] cluster.

Belongs to the complex I 23 kDa subunit family. In terms of assembly, NDH is composed of at least 16 different subunits, 5 of which are encoded in the nucleus. [4Fe-4S] cluster serves as cofactor.

Its subcellular location is the plastid. It is found in the chloroplast thylakoid membrane. The catalysed reaction is a plastoquinone + NADH + (n+1) H(+)(in) = a plastoquinol + NAD(+) + n H(+)(out). The enzyme catalyses a plastoquinone + NADPH + (n+1) H(+)(in) = a plastoquinol + NADP(+) + n H(+)(out). Its function is as follows. NDH shuttles electrons from NAD(P)H:plastoquinone, via FMN and iron-sulfur (Fe-S) centers, to quinones in the photosynthetic chain and possibly in a chloroplast respiratory chain. The immediate electron acceptor for the enzyme in this species is believed to be plastoquinone. Couples the redox reaction to proton translocation, and thus conserves the redox energy in a proton gradient. This is NAD(P)H-quinone oxidoreductase subunit I, chloroplastic from Psilotum nudum (Whisk fern).